The primary structure comprises 729 residues: Polyribonucleotide nucleotidyltransferase (729 aa).

Mg(2+)-binding residues include aspartate 510 and aspartate 516. The KH domain occupies 576 to 635 (PRVISVKIPVDKIGEVIGPKGKMINQIQADSGAEITVEDDGTIYIGAADGTSAETARSAI). The S1 motif domain maps to 647–719 (GERYLGTIVK…ARGKISLSPS (73 aa)).

This sequence belongs to the polyribonucleotide nucleotidyltransferase family. Requires Mg(2+) as cofactor.

The protein resides in the cytoplasm. It carries out the reaction RNA(n+1) + phosphate = RNA(n) + a ribonucleoside 5'-diphosphate. In terms of biological role, involved in mRNA degradation. Catalyzes the phosphorolysis of single-stranded polyribonucleotides processively in the 3'- to 5'-direction. This chain is Polyribonucleotide nucleotidyltransferase, found in Frankia alni (strain DSM 45986 / CECT 9034 / ACN14a).